The primary structure comprises 302 residues: Uricase (302 aa).

The residue at position 2 (S2) is an N-acetylserine. Residues K11 and T58 each act as charge relay system in the active site. 7 residues coordinate 5-hydroxyisourate: T58, D59, F160, R177, V228, Q229, and N255. T58 is an O2 binding site. Urate is bound by residues T58, D59, F160, R177, V228, Q229, and N255. N255 contacts O2. H257 functions as the Charge relay system in the catalytic mechanism. The short motif at 300-302 (SKL) is the Microbody targeting signal element.

The protein belongs to the uricase family. In terms of assembly, homotetramer.

It is found in the peroxisome. The catalysed reaction is urate + O2 + H2O = 5-hydroxyisourate + H2O2. It functions in the pathway purine metabolism; urate degradation; (S)-allantoin from urate: step 1/3. With respect to regulation, 8-Azaxanthine is one of the most potent competitive inhibitors of uricase activity. Hypoxanthine has only a small inhibitor effect, and caffeine has no effect at all. Azide not only competes with dioxygen but also competes with the substrate for its enzymatic site. Urate oxidase is a cofactorless enzyme involved in the metabolism of purines. Catalyzes, in the presence of molecular oxygen, the hydroxylation of uric acid to metastable 5-hydroxyisourate (5-HIU) which is further degraded to allantoin. This is Uricase from Aspergillus flavus.